The chain runs to 150 residues: Snaclec rhinocetin subunit beta (150 aa).

The first 23 residues, 1–23 (MGRFIFLSSGLLVVFLSLSGTGA), serve as a signal peptide directing secretion. Disulfide bonds link Cys27–Cys38, Cys55–Cys144, and Cys121–Cys136. One can recognise a C-type lectin domain in the interval 34–145 (YEGYCYKVFK…CNRQQYFVCK (112 aa)).

Belongs to the snaclec family. As to quaternary structure, heterodimer; disulfide-linked. As to expression, expressed by the venom gland.

Its subcellular location is the secreted. In terms of biological role, antagonist of the alpha-2 subunit of the integrin alpha-2/beta-1 (ITGA2/ITGB1) on human platelets and endothelial cells. This protein inhibits collagen-stimulated activation of human platelets in a dose-dependent manner. In addition, it antagonizes the binding of monoclonal antibodies against the alpha-2 subunit of integrin alpha-2/beta-1 to platelets and it coimmunoprecipitates with this integrin. The chain is Snaclec rhinocetin subunit beta from Bitis rhinoceros (West African gaboon viper).